A 102-amino-acid chain; its full sequence is Small ribosomal subunit protein uS10c (102 aa).

Belongs to the universal ribosomal protein uS10 family. In terms of assembly, part of the 30S ribosomal subunit.

The protein resides in the plastid. Its subcellular location is the chloroplast. In terms of biological role, involved in the binding of tRNA to the ribosomes. In Guillardia theta (Cryptophyte), this protein is Small ribosomal subunit protein uS10c.